Consider the following 248-residue polypeptide: Cobalt transport protein CbiM (248 aa).

The first 31 residues, 1-31 (MLKVIKKYRKFITFLMIGLVYTLAYPATAHA), serve as a signal peptide directing secretion. Helical transmembrane passes span 39 to 59 (LPPR…IYGL), 75 to 95 (VMLA…LPSV), 107 to 127 (LGTV…VLLF), 139 to 159 (TLGA…YAVW), 173 to 195 (LFLC…LAIV), and 213 to 233 (IYAI…VIVY).

This sequence belongs to the CbiM family. Forms an energy-coupling factor (ECF) transporter complex composed of an ATP-binding protein (A component, CbiO), a transmembrane protein (T component, CbiQ) and 2 possible substrate-capture proteins (S components, CbiM and CbiN) of unknown stoichimetry.

The protein localises to the cell membrane. It functions in the pathway cofactor biosynthesis; adenosylcobalamin biosynthesis. Functionally, part of the energy-coupling factor (ECF) transporter complex CbiMNOQ involved in cobalt import. The protein is Cobalt transport protein CbiM of Limosilactobacillus reuteri (strain DSM 20016) (Lactobacillus reuteri).